The sequence spans 339 residues: Meiotic recombination protein rec7 (339 aa).

Its function is as follows. May be involved primarily in the early steps of meiotic recombination. The polypeptide is Meiotic recombination protein rec7 (rec7) (Schizosaccharomyces pombe (strain 972 / ATCC 24843) (Fission yeast)).